The sequence spans 378 residues: Cytochrome b (378 aa).

4 consecutive transmembrane segments (helical) span residues 34 to 54 (FGSL…FLAM), 78 to 99 (WLLR…YLHV), 114 to 134 (WLIG…GYVL), and 179 to 199 (FFTF…IHLL). Heme b-binding residues include H84 and H98. Heme b is bound by residues H183 and H197. H202 contacts a ubiquinone. Helical transmembrane passes span 227–247 (FKDI…VLIS), 289–309 (LGGV…PFYN), 321–341 (INQV…WIGA), and 348–368 (YVLI…VNPL).

Belongs to the cytochrome b family. In terms of assembly, the main subunits of complex b-c1 are: cytochrome b, cytochrome c1 and the Rieske protein. It depends on heme b as a cofactor.

The protein resides in the mitochondrion inner membrane. Functionally, component of the ubiquinol-cytochrome c reductase complex (complex III or cytochrome b-c1 complex) that is part of the mitochondrial respiratory chain. The b-c1 complex mediates electron transfer from ubiquinol to cytochrome c. Contributes to the generation of a proton gradient across the mitochondrial membrane that is then used for ATP synthesis. The polypeptide is Cytochrome b (mt:Cyt-b) (Drosophila simulans (Fruit fly)).